The following is a 138-amino-acid chain: ATP synthase epsilon chain (138 aa).

Belongs to the ATPase epsilon chain family. F-type ATPases have 2 components, CF(1) - the catalytic core - and CF(0) - the membrane proton channel. CF(1) has five subunits: alpha(3), beta(3), gamma(1), delta(1), epsilon(1). CF(0) has three main subunits: a, b and c.

It localises to the cell membrane. Its function is as follows. Produces ATP from ADP in the presence of a proton gradient across the membrane. The polypeptide is ATP synthase epsilon chain (Polynucleobacter asymbioticus (strain DSM 18221 / CIP 109841 / QLW-P1DMWA-1) (Polynucleobacter necessarius subsp. asymbioticus)).